A 165-amino-acid polypeptide reads, in one-letter code: Transmembrane protein 128 (165 aa).

Transmembrane regions (helical) follow at residues 49 to 69, 81 to 101, 119 to 139, and 144 to 164; these read NIHS…VDFF, WFLC…YCIV, LIPI…IALW, and FFTP…ITLL.

The protein resides in the membrane. The chain is Transmembrane protein 128 (TMEM128) from Homo sapiens (Human).